Reading from the N-terminus, the 1061-residue chain is Ceruloplasmin (1061 aa).

The signal sequence occupies residues 1–19; sequence MKFLLLSTFIFLYSSLALA. 6 Plastocyanin-like domains span residues 20–199, 208–356, 369–555, 565–713, 725–895, and 903–1057; these read RDKH…LILC, KEKN…VRDC, HVRH…MKIC, RQKD…VNQC, GERT…LIVC, and FSPK…VEQE. Na(+) contacts are provided by Tyr-55, Gly-64, and Tyr-67. His-120 and His-122 together coordinate Cu(2+). His-120 provides a ligand contact to O2. Lys-128 is a Ca(2+) binding site. An N-linked (GlcNAc...) asparagine glycan is attached at Asn-138. Positions 143, 146, and 147 each coordinate Ca(2+). An intrachain disulfide couples Cys-173 to Cys-199. Residues His-179 and His-181 each contribute to the Cu(2+) site. Position 179 (His-179) interacts with O2. Residue Asn-226 is glycosylated (N-linked (GlcNAc...) asparagine). Ser-255 serves as a coordination point for Na(+). Cys-275 and Cys-356 are oxidised to a cystine. Residues His-294, Cys-337, and His-342 each contribute to the Cu(2+) site. Asn-396 carries N-linked (GlcNAc...) asparagine glycosylation. Positions 407, 416, and 419 each coordinate Na(+). Residues Cys-529 and Cys-555 are joined by a disulfide bond. Residue Asn-583 is glycosylated (N-linked (GlcNAc...) asparagine). Position 612 (Ser-612) interacts with Na(+). Cys-632 and Cys-713 are disulfide-bonded. The Cu(2+) site is built by His-651, Cys-694, His-699, and Met-704. Cys-694 (nucleophile; for glutathione peroxidase activity) is an active-site residue. Asn-757 carries N-linked (GlcNAc...) asparagine glycosylation. Residues Phe-762, Gly-771, and Tyr-774 each coordinate Na(+). Cysteines 869 and 895 form a disulfide. Asn-921 carries an N-linked (GlcNAc...) asparagine glycan. Ser-950 lines the Na(+) pocket. Cu(2+) is bound by residues His-989, His-992, His-994, His-1034, Cys-1035, His-1036, His-1040, and Met-1045. 2 residues coordinate O2: His-992 and His-994. O2 is bound at residue His-1036.

Belongs to the multicopper oxidase family. Found in a complex with MPO and LTF; interacts directly with MPO and LTF, which allows Fe(3+) incorporation into LTF, activation of CP ferroxidase activity and protection of CP antioxidant properties by MPO. It depends on Cu(2+) as a cofactor. As to expression, expressed in many tissues, including liver, eye and brain.

Its subcellular location is the secreted. It catalyses the reaction 4 Fe(2+) + O2 + 4 H(+) = 4 Fe(3+) + 2 H2O. It carries out the reaction 4 Cu(+) + O2 + 4 H(+) = 4 Cu(2+) + 2 H2O. The catalysed reaction is a hydroperoxide + 2 glutathione = an alcohol + glutathione disulfide + H2O. The enzyme catalyses 4 nitric oxide + O2 + 2 H2O = 4 nitrite + 4 H(+). It catalyses the reaction 2 glutathione + H2O2 = glutathione disulfide + 2 H2O. In terms of biological role, multifunctional blue, copper-binding (6-7 atoms per molecule) glycoprotein. It has ferroxidase activity oxidizing Fe(2+) to Fe(3+) without releasing radical oxygen species. It is involved in iron transport across the cell membrane. Copper ions provide a large number of enzymatic activites. Oxidizes highly toxic ferrous ions to the ferric state for further incorporation onto apo-transferrins, catalyzes Cu(+) oxidation and promotes the oxidation of biogenic amines such as norepinephrin and serotonin. Provides Cu(2+) ions for the ascorbate-mediated deaminase degradation of the heparan sulfate chains of GPC1. Has glutathione peroxidase-like activity, can remove both hydrogen peroxide and lipid hydroperoxide in the presence of thiols. Also shows NO-oxidase and NO2 synthase activities that determine endocrine NO homeostasis. In Mus musculus (Mouse), this protein is Ceruloplasmin (Cp).